The sequence spans 172 residues: Small ribosomal subunit protein uS5 (172 aa).

Residues 16–79 (LKEKLVHINR…EDGKKNVIKV (64 aa)) form the S5 DRBM domain.

Belongs to the universal ribosomal protein uS5 family. In terms of assembly, part of the 30S ribosomal subunit. Contacts proteins S4 and S8.

Its function is as follows. With S4 and S12 plays an important role in translational accuracy. Functionally, located at the back of the 30S subunit body where it stabilizes the conformation of the head with respect to the body. The chain is Small ribosomal subunit protein uS5 from Chlorobium phaeobacteroides (strain DSM 266 / SMG 266 / 2430).